We begin with the raw amino-acid sequence, 1003 residues long: MGMRPPARMPKLTRRSRVLIGVALAAVVLLLIGPRFIDTYVNWLWFGELGYRSVFTTVLLTRVVVFLVVSLLIGAIVFAGLALAYRTRPVFVPTAGPNDPIARYRTTVMARLRLFGFGVPAFIGILSGIVAQSYWVRIQLFLHGGEFGVTDPQFGLDLGFYAFDLPFYRLVLSYLFVATFLAFIANLLGHYLFGGIRLTGRNGALTRSARIQLVTLVGILILLKAFAYWLDRYELLSHTRGGKPFTGAGYTDINAVLPAKLILLAIAVICAVAVFSAIVLRDLRIPAIGVVLLLLSSLVVGAGWPLVVEQFSVKPNAAQKESEYISRSIAATRQAYGLTDEVVTYRDYPGNAPATAQQVAADRSTTSNIRVLDPNIVSPAFTQFQQGKNFYFFPEQLAMDRYRDADGNLRDYVVAARELNPDRLIDNQRDWINRHTVYTHGNGFIASPANTVRGIANDPNQNGGYPEFLASVVGANGAVVSPGPAPLDQPRIYFGPVIANTASDYAIVGENGTPREYDYENNVETRNYTYTGSGGVPIGNWLTRSLFAAKFAERNFLFSNVIGENSKILFNRDPADRVEAVAPWLTTDTTVYPAIVNKKIVWIVDGYTTLDNYPYSELTSLSSATADSNEVAVNRLALNKQVSYIRNSVKATVDAYDGTVTLYAQDETDPVLQAWMKVFPDTIKPKSEISPELQQHLRYPEDLFKVQRALLAKYHVDDPVTFFSTSDFWDVPLDPNPTASSFQPPYYIVAKDLAENNNSAAFQLTSAMNRFRRDFLAAYMSASSDPETYGKITVLTIPGQVNGPKLAFNAISTDTAVSQDLGVIGRDNQNRIRWGNLLTLPVGPGGLLYVAPVYASPGTSDAASTYPRLIRVAMFYNDQVGYGPTVRDALTDLFGAGADATATGPAPANLPDGQPAAQPPNGQQPAAQTPGNQAGRAPTPPPAAIPSGPSGPQQLSEAKAAALQEVQEAMSGLQDAQRSGNFAEYGEALQRLDDAMNRYSEAR.

Transmembrane regions (helical) follow at residues 18 to 38 (VLIG…RFID), 63 to 83 (VVVF…GLAL), 114 to 134 (LFGF…AQSY), 176 to 196 (FVAT…FGGI), 211 to 231 (IQLV…YWLD), 260 to 280 (KLIL…AIVL), and 288 to 308 (IGVV…PLVV). Over residues 902 to 937 (ATGPAPANLPDGQPAAQPPNGQQPAAQTPGNQAGRA) the composition is skewed to low complexity. Residues 902–979 (ATGPAPANLP…MSGLQDAQRS (78 aa)) are disordered.

This sequence belongs to the UPF0182 family.

The protein localises to the cell membrane. This chain is UPF0182 protein Mkms_1433, found in Mycobacterium sp. (strain KMS).